Reading from the N-terminus, the 483-residue chain is Bifunctional protein HldE (483 aa).

Residues 1–327 (MDDALAHLPR…ACASSAQGEP (327 aa)) are ribokinase. ATP is bound at residue 201 to 204 (NRKE). Asp272 is a catalytic residue. A cytidylyltransferase region spans residues 354–483 (FTNGCFDLLH…TTNLIARMNS (130 aa)).

It in the N-terminal section; belongs to the carbohydrate kinase PfkB family. The protein in the C-terminal section; belongs to the cytidylyltransferase family. In terms of assembly, homodimer.

The enzyme catalyses D-glycero-beta-D-manno-heptose 7-phosphate + ATP = D-glycero-beta-D-manno-heptose 1,7-bisphosphate + ADP + H(+). It catalyses the reaction D-glycero-beta-D-manno-heptose 1-phosphate + ATP + H(+) = ADP-D-glycero-beta-D-manno-heptose + diphosphate. Its pathway is nucleotide-sugar biosynthesis; ADP-L-glycero-beta-D-manno-heptose biosynthesis; ADP-L-glycero-beta-D-manno-heptose from D-glycero-beta-D-manno-heptose 7-phosphate: step 1/4. It participates in nucleotide-sugar biosynthesis; ADP-L-glycero-beta-D-manno-heptose biosynthesis; ADP-L-glycero-beta-D-manno-heptose from D-glycero-beta-D-manno-heptose 7-phosphate: step 3/4. Functionally, catalyzes the phosphorylation of D-glycero-D-manno-heptose 7-phosphate at the C-1 position to selectively form D-glycero-beta-D-manno-heptose-1,7-bisphosphate. Catalyzes the ADP transfer from ATP to D-glycero-beta-D-manno-heptose 1-phosphate, yielding ADP-D-glycero-beta-D-manno-heptose. The chain is Bifunctional protein HldE from Caulobacter vibrioides (strain ATCC 19089 / CIP 103742 / CB 15) (Caulobacter crescentus).